A 38-amino-acid polypeptide reads, in one-letter code: Small ribosomal subunit protein eS32 (38 aa).

The protein belongs to the eukaryotic ribosomal protein eS32 family. Component of the small ribosomal subunit (SSU).

This chain is Small ribosomal subunit protein eS32 (rpl41e), found in Methanocaldococcus jannaschii (strain ATCC 43067 / DSM 2661 / JAL-1 / JCM 10045 / NBRC 100440) (Methanococcus jannaschii).